A 79-amino-acid chain; its full sequence is Small ribosomal subunit protein bS18 (79 aa).

Belongs to the bacterial ribosomal protein bS18 family. As to quaternary structure, part of the 30S ribosomal subunit. Forms a tight heterodimer with protein bS6.

Its function is as follows. Binds as a heterodimer with protein bS6 to the central domain of the 16S rRNA, where it helps stabilize the platform of the 30S subunit. The sequence is that of Small ribosomal subunit protein bS18 from Bradyrhizobium diazoefficiens (strain JCM 10833 / BCRC 13528 / IAM 13628 / NBRC 14792 / USDA 110).